Consider the following 197-residue polypeptide: Small ribosomal subunit protein uS4B (197 aa).

The S4 RNA-binding domain occupies 88–150 (SRLDNMVYRM…SRKTEMFVNN (63 aa)).

This sequence belongs to the universal ribosomal protein uS4 family. Part of the 30S ribosomal subunit. Contacts protein S5. The interaction surface between S4 and S5 is involved in control of translational fidelity.

Functionally, one of the primary rRNA binding proteins, it binds directly to 16S rRNA where it nucleates assembly of the body of the 30S subunit. With S5 and S12 plays an important role in translational accuracy. The protein is Small ribosomal subunit protein uS4B (rpsD2) of Clostridium perfringens (strain 13 / Type A).